Here is a 155-residue protein sequence, read N- to C-terminus: MADVPKREIENVEFVFEVMGSAGEGIDAVDLGDALRALNLNPTLALIEKMGGTKKRNEKKIKMDEFLPIYSQVKKEKEQGCYEDFIECLKLYDKEENGTMMLAELQHALLALGESLDDEQVETLFADCMDPEDDEGLIPYSQFIQRLMSDPVVFD.

2 EF-hand domains span residues 7 to 41 (REIE…LNLN) and 80 to 115 (GCYE…LGES).

Myosin is a hexamer of 2 heavy chains and 4 light chains.

The sequence is that of Myosin light chain alkali (Mlc1) from Drosophila pseudoobscura pseudoobscura (Fruit fly).